We begin with the raw amino-acid sequence, 151 residues long: Chaperonin GroEL (151 aa).

41–45 is a binding site for ATP; it reads DGTTT.

It belongs to the chaperonin (HSP60) family. As to quaternary structure, forms a cylinder of 14 subunits composed of two heptameric rings stacked back-to-back. Interacts with the co-chaperonin GroES.

Its subcellular location is the cytoplasm. The catalysed reaction is ATP + H2O + a folded polypeptide = ADP + phosphate + an unfolded polypeptide.. Its function is as follows. Together with its co-chaperonin GroES, plays an essential role in assisting protein folding. The GroEL-GroES system forms a nano-cage that allows encapsulation of the non-native substrate proteins and provides a physical environment optimized to promote and accelerate protein folding. In Mycobacterium avium, this protein is Chaperonin GroEL.